The following is a 675-amino-acid chain: Methionine--tRNA ligase (675 aa).

The 'HIGH' region signature appears at 15–25 (PYANGSIHLGH). Residues C146, C149, C159, and C162 each coordinate Zn(2+). Residues 332–336 (KMSKS) carry the 'KMSKS' region motif. ATP is bound at residue K335. The region spanning 573 to 675 (DFAKVDMRIA…SGAQPGMQVK (103 aa)) is the tRNA-binding domain.

Belongs to the class-I aminoacyl-tRNA synthetase family. MetG type 1 subfamily. In terms of assembly, homodimer. The cofactor is Zn(2+).

The protein localises to the cytoplasm. It carries out the reaction tRNA(Met) + L-methionine + ATP = L-methionyl-tRNA(Met) + AMP + diphosphate. Its function is as follows. Is required not only for elongation of protein synthesis but also for the initiation of all mRNA translation through initiator tRNA(fMet) aminoacylation. This chain is Methionine--tRNA ligase, found in Yersinia pseudotuberculosis serotype O:3 (strain YPIII).